The chain runs to 734 residues: Casein kinase II subunit alpha'-interacting protein (734 aa).

The disordered stretch occupies residues 608-654 (SLLPSTSSSTSSSSTTSSSSSVASASSDSSSSSSSSSSFSISSSSSP). Over residues 612-654 (STSSSTSSSSTTSSSSSVASASSDSSSSSSSSSSFSISSSSSP) the composition is skewed to low complexity.

As to quaternary structure, interacts (via C-terminus) with CSNK2A2. Phosphorylated by CK2 (casein kinase II), specifically by complexes containing catalytic subunit CSNK2A2.

It localises to the nucleus. May play a role in chromatin regulation of male germ cells. This Homo sapiens (Human) protein is Casein kinase II subunit alpha'-interacting protein.